Here is a 266-residue protein sequence, read N- to C-terminus: DNA-directed RNA polymerase subunit Rpo3 (266 aa).

Residues Cys205, Cys208, and Cys211 each contribute to the [3Fe-4S] cluster site.

It belongs to the archaeal Rpo3/eukaryotic RPB3 RNA polymerase subunit family. In terms of assembly, part of the RNA polymerase complex. Requires [3Fe-4S] cluster as cofactor.

It is found in the cytoplasm. It carries out the reaction RNA(n) + a ribonucleoside 5'-triphosphate = RNA(n+1) + diphosphate. Its function is as follows. DNA-dependent RNA polymerase (RNAP) catalyzes the transcription of DNA into RNA using the four ribonucleoside triphosphates as substrates. In Methanosarcina mazei (strain ATCC BAA-159 / DSM 3647 / Goe1 / Go1 / JCM 11833 / OCM 88) (Methanosarcina frisia), this protein is DNA-directed RNA polymerase subunit Rpo3.